The following is a 221-amino-acid chain: Deoxyribose-phosphate aldolase (221 aa).

Asp90 serves as the catalytic Proton donor/acceptor. Lys152 serves as the catalytic Schiff-base intermediate with acetaldehyde. Lys181 acts as the Proton donor/acceptor in catalysis.

Belongs to the DeoC/FbaB aldolase family. DeoC type 1 subfamily.

The protein resides in the cytoplasm. It catalyses the reaction 2-deoxy-D-ribose 5-phosphate = D-glyceraldehyde 3-phosphate + acetaldehyde. It participates in carbohydrate degradation; 2-deoxy-D-ribose 1-phosphate degradation; D-glyceraldehyde 3-phosphate and acetaldehyde from 2-deoxy-alpha-D-ribose 1-phosphate: step 2/2. Catalyzes a reversible aldol reaction between acetaldehyde and D-glyceraldehyde 3-phosphate to generate 2-deoxy-D-ribose 5-phosphate. This Exiguobacterium sp. (strain ATCC BAA-1283 / AT1b) protein is Deoxyribose-phosphate aldolase.